The chain runs to 176 residues: Xanthine-guanine phosphoribosyltransferase (176 aa).

5-phospho-alpha-D-ribose 1-diphosphate is bound by residues 51-52 (RG) and 110-118 (DDLVDTGKT). Residue aspartate 111 participates in Mg(2+) binding. Residues aspartate 114 and isoleucine 157 each contribute to the guanine site. 2 residues coordinate xanthine: aspartate 114 and isoleucine 157. Residues 114 to 118 (DTGKT) and 156 to 157 (WI) contribute to the GMP site.

This sequence belongs to the purine/pyrimidine phosphoribosyltransferase family. XGPT subfamily. As to quaternary structure, homotetramer. It depends on Mg(2+) as a cofactor.

It localises to the cell inner membrane. The catalysed reaction is GMP + diphosphate = guanine + 5-phospho-alpha-D-ribose 1-diphosphate. The enzyme catalyses XMP + diphosphate = xanthine + 5-phospho-alpha-D-ribose 1-diphosphate. It carries out the reaction IMP + diphosphate = hypoxanthine + 5-phospho-alpha-D-ribose 1-diphosphate. The protein operates within purine metabolism; GMP biosynthesis via salvage pathway; GMP from guanine: step 1/1. It participates in purine metabolism; XMP biosynthesis via salvage pathway; XMP from xanthine: step 1/1. Its function is as follows. Purine salvage pathway enzyme that catalyzes the transfer of the ribosyl-5-phosphate group from 5-phospho-alpha-D-ribose 1-diphosphate (PRPP) to the N9 position of the 6-oxopurines guanine and xanthine to form the corresponding ribonucleotides GMP (guanosine 5'-monophosphate) and XMP (xanthosine 5'-monophosphate), with the release of PPi. To a lesser extent, also acts on hypoxanthine. In Bradyrhizobium diazoefficiens (strain JCM 10833 / BCRC 13528 / IAM 13628 / NBRC 14792 / USDA 110), this protein is Xanthine-guanine phosphoribosyltransferase.